The chain runs to 160 residues: MAKLKKHPTGTIAQNKKARHDYFIEHKFEAGLVLSGWEVKSLRATKVQLVDSYVLLKDGEAWLMGCHITPLKTASTHVIADPTRTRKLLLNQRELEKLTSSVQQKGYACVALSIYWKQHLIKCEIALGKGKKEYDKRHTERERDSDRELQRAVRTKGKDD.

The interval 131 to 160 (KKEYDKRHTERERDSDRELQRAVRTKGKDD) is disordered.

It belongs to the SmpB family.

It is found in the cytoplasm. In terms of biological role, required for rescue of stalled ribosomes mediated by trans-translation. Binds to transfer-messenger RNA (tmRNA), required for stable association of tmRNA with ribosomes. tmRNA and SmpB together mimic tRNA shape, replacing the anticodon stem-loop with SmpB. tmRNA is encoded by the ssrA gene; the 2 termini fold to resemble tRNA(Ala) and it encodes a 'tag peptide', a short internal open reading frame. During trans-translation Ala-aminoacylated tmRNA acts like a tRNA, entering the A-site of stalled ribosomes, displacing the stalled mRNA. The ribosome then switches to translate the ORF on the tmRNA; the nascent peptide is terminated with the 'tag peptide' encoded by the tmRNA and targeted for degradation. The ribosome is freed to recommence translation, which seems to be the essential function of trans-translation. The sequence is that of SsrA-binding protein from Pseudomonas syringae pv. tomato (strain ATCC BAA-871 / DC3000).